Consider the following 228-residue polypeptide: Probable septum site-determining protein MinC (228 aa).

Belongs to the MinC family. As to quaternary structure, interacts with MinD and FtsZ.

Its function is as follows. Cell division inhibitor that blocks the formation of polar Z ring septums. Rapidly oscillates between the poles of the cell to destabilize FtsZ filaments that have formed before they mature into polar Z rings. Prevents FtsZ polymerization. The polypeptide is Probable septum site-determining protein MinC (Pectobacterium atrosepticum (strain SCRI 1043 / ATCC BAA-672) (Erwinia carotovora subsp. atroseptica)).